We begin with the raw amino-acid sequence, 574 residues long: Proline--tRNA ligase (574 aa).

This sequence belongs to the class-II aminoacyl-tRNA synthetase family. ProS type 1 subfamily. Homodimer.

The protein resides in the cytoplasm. It catalyses the reaction tRNA(Pro) + L-proline + ATP = L-prolyl-tRNA(Pro) + AMP + diphosphate. In terms of biological role, catalyzes the attachment of proline to tRNA(Pro) in a two-step reaction: proline is first activated by ATP to form Pro-AMP and then transferred to the acceptor end of tRNA(Pro). As ProRS can inadvertently accommodate and process non-cognate amino acids such as alanine and cysteine, to avoid such errors it has two additional distinct editing activities against alanine. One activity is designated as 'pretransfer' editing and involves the tRNA(Pro)-independent hydrolysis of activated Ala-AMP. The other activity is designated 'posttransfer' editing and involves deacylation of mischarged Ala-tRNA(Pro). The misacylated Cys-tRNA(Pro) is not edited by ProRS. The protein is Proline--tRNA ligase of Desulfovibrio desulfuricans (strain ATCC 27774 / DSM 6949 / MB).